A 1209-amino-acid chain; its full sequence is Protein phosphatase 1 regulatory subunit 26 (1209 aa).

Disordered regions lie at residues 57-91 (DGAARGTSDERAAQRGHRAEGCHDARPAAKPTVHK), 145-279 (SGAA…HRQG), 291-471 (KPPR…VERS), 501-532 (GSDGSLSASPLFYSPNVPSRSDGDSSSVDSDD), 555-694 (GESC…EDLD), 733-836 (EQLG…SNDS), 848-1033 (KAKE…FAHQ), 1052-1072 (RGGVGSERDKGSEGPARGLPS), and 1118-1209 (AFRE…VVKV). Residues 63–91 (TSDERAAQRGHRAEGCHDARPAAKPTVHK) are compositionally biased toward basic and acidic residues. Residues 201-219 (QVGSSKDQGSASPVSVSSD) show a composition bias toward low complexity. Residues 226–255 (IRAEIEQFLNEKRQHETQKCDGSVEKKPDT) are compositionally biased toward basic and acidic residues. The segment covering 301 to 321 (QPRSLRSKVTTTQENEGSTKP) has biased composition (polar residues). Over residues 352–362 (SAAQASEASDS) the composition is skewed to low complexity. Residues 442 to 454 (DTDHAPKLLKETK) show a composition bias toward basic and acidic residues. 3 stretches are compositionally biased toward basic and acidic residues: residues 609–637 (KMQEVVKDGSQDADHSQGRAEPGHERRDL), 667–685 (KTDEARRLDEKESSEDKSS), and 757–766 (SKRDSGEGPG). Low complexity-rich tracts occupy residues 821-836 (PGSLSDDSSSVDSNDS) and 852-861 (SVSSSEVQAE). At serine 1161 the chain carries Phosphoserine. A compositionally biased stretch (low complexity) spans 1187–1209 (GSDASDFSDTSTEDSGGSSVVKV).

As to quaternary structure, interacts with UTP20 and PPP1CA. As to expression, ubiquitous in normal tissues. Expressed in numerous adenocarcinoma cell lines.

Its subcellular location is the nucleus. The protein resides in the nucleolus. In terms of biological role, inhibits phosphatase activity of protein phosphatase 1 (PP1) complexes. May positively regulate cell proliferation. The protein is Protein phosphatase 1 regulatory subunit 26 (PPP1R26) of Homo sapiens (Human).